Here is a 482-residue protein sequence, read N- to C-terminus: L-propargylglycine--L-glutamate ligase (482 aa).

It carries out the reaction L-propargylglycine + L-glutamate + ATP = L-gamma-glutamyl-L-propargylglycine + ADP + phosphate + H(+). It participates in amino-acid metabolism. The protein operates within antibiotic biosynthesis. Functionally, involved in the biosynthesis of terminal alkyne-containing amino acids such as L-beta-ethynylserine, that are produced as antibiotics by S.cattleya. Catalyzes the ATP-dependent ligation of L-propargylglycine to L-glutamate to form the dipeptide L-gamma-glutamyl-L-propargylglycine. Is selective for L-propargylglycine over norvaline, allylglycine and the standard proteinogenic amino acids, except L-cysteine which can be used as a substrate to a lesser extent. The sequence is that of L-propargylglycine--L-glutamate ligase from Streptantibioticus cattleyicolor (strain ATCC 35852 / DSM 46488 / JCM 4925 / NBRC 14057 / NRRL 8057) (Streptomyces cattleya).